A 447-amino-acid polypeptide reads, in one-letter code: Chromosomal replication initiator protein DnaA (447 aa).

The tract at residues 1-74 (MPDVESFWHS…TGFKLTGAEV (74 aa)) is domain I, interacts with DnaA modulators. A domain II region spans residues 74–109 (VMPHFVVADEKDAALAQELEEPAEEEVVFSEQSKKA). The tract at residues 110–326 (MLNPKYTFDT…GALVRVQAFA (217 aa)) is domain III, AAA+ region. Positions 154, 156, 157, and 158 each coordinate ATP. The interval 327 to 447 (TINGEDITTS…VSEIKNLLNS (121 aa)) is domain IV, binds dsDNA.

It belongs to the DnaA family. Oligomerizes as a right-handed, spiral filament on DNA at oriC.

Its subcellular location is the cytoplasm. Its function is as follows. Plays an essential role in the initiation and regulation of chromosomal replication. ATP-DnaA binds to the origin of replication (oriC) to initiate formation of the DNA replication initiation complex once per cell cycle. Binds the DnaA box (a 9 base pair repeat at the origin) and separates the double-stranded (ds)DNA. Forms a right-handed helical filament on oriC DNA; dsDNA binds to the exterior of the filament while single-stranded (ss)DNA is stabiized in the filament's interior. The ATP-DnaA-oriC complex binds and stabilizes one strand of the AT-rich DNA unwinding element (DUE), permitting loading of DNA polymerase. After initiation quickly degrades to an ADP-DnaA complex that is not apt for DNA replication. Binds acidic phospholipids. In terms of biological role, strand separation requires the DnaA boxes and adjacent DnaA-trio motifs as well as ATP. This chain is Chromosomal replication initiator protein DnaA, found in Enterococcus faecalis (strain ATCC 700802 / V583).